Reading from the N-terminus, the 247-residue chain is Elongation factor Ts (247 aa).

Residues 82–85 (TDFV) are involved in Mg(2+) ion dislocation from EF-Tu.

It belongs to the EF-Ts family.

Its subcellular location is the cytoplasm. Associates with the EF-Tu.GDP complex and induces the exchange of GDP to GTP. It remains bound to the aminoacyl-tRNA.EF-Tu.GTP complex up to the GTP hydrolysis stage on the ribosome. The protein is Elongation factor Ts (tsf) of Arthrospira platensis (Spirulina platensis).